Here is a 269-residue protein sequence, read N- to C-terminus: Regulatory protein RecX (269 aa).

Belongs to the RecX family.

It is found in the cytoplasm. In terms of biological role, modulates RecA activity. The protein is Regulatory protein RecX of Listeria monocytogenes serotype 4b (strain F2365).